A 423-amino-acid polypeptide reads, in one-letter code: Dihydroorotase-like protein (423 aa).

This sequence belongs to the metallo-dependent hydrolases superfamily. DHOase family. PyrC' subfamily. As to quaternary structure, heterododecamer of 6 active PyrB subunits and 6 non-catalytic PyrC' subunits.

Functionally, non-functional DHOase. This is Dihydroorotase-like protein (pyrC') from Pseudomonas aeruginosa (strain ATCC 15692 / DSM 22644 / CIP 104116 / JCM 14847 / LMG 12228 / 1C / PRS 101 / PAO1).